Reading from the N-terminus, the 239-residue chain is Uridylate kinase (239 aa).

K13–G16 is a binding site for ATP. Residue G55 coordinates UMP. ATP-binding residues include G56 and R60. Residues D75 and T136–T143 each bind UMP. Residues T163, Q164, Y169, and D172 each coordinate ATP.

This sequence belongs to the UMP kinase family. As to quaternary structure, homohexamer.

Its subcellular location is the cytoplasm. It carries out the reaction UMP + ATP = UDP + ADP. Its pathway is pyrimidine metabolism; CTP biosynthesis via de novo pathway; UDP from UMP (UMPK route): step 1/1. Its activity is regulated as follows. Inhibited by UTP. Its function is as follows. Catalyzes the reversible phosphorylation of UMP to UDP. This is Uridylate kinase from Bartonella henselae (strain ATCC 49882 / DSM 28221 / CCUG 30454 / Houston 1) (Rochalimaea henselae).